The primary structure comprises 509 residues: Glutamyl-tRNA(Gln) amidotransferase subunit B, mitochondrial (509 aa).

Belongs to the GatB/GatE family. GatB subfamily. As to quaternary structure, subunit of the heterotrimeric GatFAB amidotransferase (AdT) complex, composed of A, B and F subunits.

Its subcellular location is the mitochondrion. It catalyses the reaction L-glutamyl-tRNA(Gln) + L-glutamine + ATP + H2O = L-glutaminyl-tRNA(Gln) + L-glutamate + ADP + phosphate + H(+). Functionally, allows the formation of correctly charged Gln-tRNA(Gln) through the transamidation of misacylated Glu-tRNA(Gln) in the mitochondria. The reaction takes place in the presence of glutamine and ATP through an activated gamma-phospho-Glu-tRNA(Gln). The polypeptide is Glutamyl-tRNA(Gln) amidotransferase subunit B, mitochondrial (Candida dubliniensis (strain CD36 / ATCC MYA-646 / CBS 7987 / NCPF 3949 / NRRL Y-17841) (Yeast)).